The sequence spans 656 residues: Pheromone-regulated membrane protein 2 (656 aa).

A run of 4 helical transmembrane segments spans residues 16-36, 320-340, 422-442, and 634-654; these read FFSC…ILTI, IIFT…ERIL, WIIS…LIHW, and WGLL…FIIL.

It localises to the membrane. The chain is Pheromone-regulated membrane protein 2 (PRM2) from Saccharomyces cerevisiae (strain ATCC 204508 / S288c) (Baker's yeast).